The following is a 162-amino-acid chain: uncharacterized protein (162 aa).

Residues 6-24 (SYLISIFYIILITSETTAF) traverse the membrane as a helical segment.

The protein localises to the membrane. This is an uncharacterized protein from Caenorhabditis elegans.